The primary structure comprises 217 residues: GRB2-related adapter protein (217 aa).

Residues 1-58 (MESVALYSFQATESDELAFNKGDTLKILNMEDDQNWYKAELRGAEGFVPKNYIRVKPH) form the SH3 1 domain. The region spanning 60 to 152 (WYSGRISRQL…RRQIFLCDEQ (93 aa)) is the SH2 domain. The 60-residue stretch at 158–217 (SRACFAQAQFDFSAQDPSQLSLRRGDIVEVVEREDPHWWRGRAGGRLGFFPRSYVQPVHL) folds into the SH3 2 domain.

Belongs to the GRB2/sem-5/DRK family. As to quaternary structure, associates through its SH2 domain with ligand-activated receptors for stem cell factor (KIT) and erythropoietin (EPOR). Also forms a stable complex with the Bcr-Abl oncoprotein. GRAP is associated with the Ras guanine nucleotide exchange factor SOS1, primarily through its N-terminal SH3 domain. Interacts with phosphorylated LAT upon TCR activation. Interacts with SHB. As to expression, expressed in inner ear, in neruonal fibers innervating cochlear and utricular auditory hair cells (at protein level).

The protein localises to the membrane. The protein resides in the synapse. Couples signals from receptor and cytoplasmic tyrosine kinases to the Ras signaling pathway. Plays a role in the inner ear and in hearing. The polypeptide is GRB2-related adapter protein (Mus musculus (Mouse)).